The following is a 262-amino-acid chain: Cytochrome c oxidase subunit 3 (262 aa).

6 helical membrane-spanning segments follow: residues Tyr-39–Trp-59, Gly-83–Phe-103, Met-120–Ala-140, Gly-163–Ile-183, Ala-201–Leu-221, and Ala-240–Trp-260.

It belongs to the cytochrome c oxidase subunit 3 family. Component of the cytochrome c oxidase (complex IV, CIV), a multisubunit enzyme composed of a catalytic core of 3 subunits and several supernumerary subunits. The complex exists as a monomer or a dimer and forms supercomplexes (SCs) in the inner mitochondrial membrane with ubiquinol-cytochrome c oxidoreductase (cytochrome b-c1 complex, complex III, CIII).

It is found in the mitochondrion inner membrane. It catalyses the reaction 4 Fe(II)-[cytochrome c] + O2 + 8 H(+)(in) = 4 Fe(III)-[cytochrome c] + 2 H2O + 4 H(+)(out). Its function is as follows. Component of the cytochrome c oxidase, the last enzyme in the mitochondrial electron transport chain which drives oxidative phosphorylation. The respiratory chain contains 3 multisubunit complexes succinate dehydrogenase (complex II, CII), ubiquinol-cytochrome c oxidoreductase (cytochrome b-c1 complex, complex III, CIII) and cytochrome c oxidase (complex IV, CIV), that cooperate to transfer electrons derived from NADH and succinate to molecular oxygen, creating an electrochemical gradient over the inner membrane that drives transmembrane transport and the ATP synthase. Cytochrome c oxidase is the component of the respiratory chain that catalyzes the reduction of oxygen to water. Electrons originating from reduced cytochrome c in the intermembrane space (IMS) are transferred via the dinuclear copper A center (CU(A)) of subunit 2 and heme A of subunit 1 to the active site in subunit 1, a binuclear center (BNC) formed by heme A3 and copper B (CU(B)). The BNC reduces molecular oxygen to 2 water molecules using 4 electrons from cytochrome c in the IMS and 4 protons from the mitochondrial matrix. The sequence is that of Cytochrome c oxidase subunit 3 (mt:CoIII) from Drosophila yakuba (Fruit fly).